The following is a 270-amino-acid chain: Formamidopyrimidine-DNA glycosylase (270 aa).

The active-site Schiff-base intermediate with DNA is the P2. The active-site Proton donor is the E3. The Proton donor; for beta-elimination activity role is filled by K58. 3 residues coordinate DNA: H91, R110, and K151. The FPG-type zinc-finger motif lies at 236-270; sequence FAYGRGGQPCKVCGTTLREIKLGQRASVYCPKCQR. Residue R260 is the Proton donor; for delta-elimination activity of the active site.

It belongs to the FPG family. In terms of assembly, monomer. Zn(2+) serves as cofactor.

It carries out the reaction Hydrolysis of DNA containing ring-opened 7-methylguanine residues, releasing 2,6-diamino-4-hydroxy-5-(N-methyl)formamidopyrimidine.. The enzyme catalyses 2'-deoxyribonucleotide-(2'-deoxyribose 5'-phosphate)-2'-deoxyribonucleotide-DNA = a 3'-end 2'-deoxyribonucleotide-(2,3-dehydro-2,3-deoxyribose 5'-phosphate)-DNA + a 5'-end 5'-phospho-2'-deoxyribonucleoside-DNA + H(+). Involved in base excision repair of DNA damaged by oxidation or by mutagenic agents. Acts as a DNA glycosylase that recognizes and removes damaged bases. Has a preference for oxidized purines, such as 7,8-dihydro-8-oxoguanine (8-oxoG). Has AP (apurinic/apyrimidinic) lyase activity and introduces nicks in the DNA strand. Cleaves the DNA backbone by beta-delta elimination to generate a single-strand break at the site of the removed base with both 3'- and 5'-phosphates. This chain is Formamidopyrimidine-DNA glycosylase, found in Pseudomonas syringae pv. tomato (strain ATCC BAA-871 / DC3000).